A 484-amino-acid polypeptide reads, in one-letter code: Cobyric acid synthase (484 aa).

The GATase cobBQ-type domain occupies 251–438; that stretch reads ALKIAVPVLP…LHGLFASDAY (188 aa). Catalysis depends on cysteine 333, which acts as the Nucleophile. Residue histidine 430 is part of the active site.

This sequence belongs to the CobB/CobQ family. CobQ subfamily.

Its pathway is cofactor biosynthesis; adenosylcobalamin biosynthesis. Its function is as follows. Catalyzes amidations at positions B, D, E, and G on adenosylcobyrinic A,C-diamide. NH(2) groups are provided by glutamine, and one molecule of ATP is hydrogenolyzed for each amidation. This chain is Cobyric acid synthase, found in Rhizobium etli (strain CIAT 652).